The following is a 489-amino-acid chain: RNA polymerase II subunit 5-mediating protein homolog (489 aa).

Disordered regions lie at residues 141 to 188 (NSDE…MDEE), 200 to 329 (EEKE…EEDE), 396 to 415 (ILKT…SYNE), and 434 to 489 (FENQ…RQNK). The span at 157–168 (QKSTTTTTTTTT) shows a compositional bias: low complexity. 2 stretches are compositionally biased toward basic and acidic residues: residues 169 to 188 (SKDK…MDEE) and 215 to 224 (FNKKFNKKLD). Composition is skewed to acidic residues over residues 227 to 265 (GSDE…EDEK), 276 to 298 (EEDD…EYYD), and 315 to 329 (QGDD…EEDE). Over residues 396-413 (ILKTNSSGNLMSTIPKSY) the composition is skewed to polar residues. The span at 480-489 (SRFKSSRQNK) shows a compositional bias: basic residues.

This sequence belongs to the RNA polymerase II subunit 5-mediating protein family.

Its subcellular location is the nucleus. The chain is RNA polymerase II subunit 5-mediating protein homolog (rmp) from Dictyostelium discoideum (Social amoeba).